The primary structure comprises 390 residues: 3-ketoacyl-CoA thiolase (390 aa).

Catalysis depends on C95, which acts as the Acyl-thioester intermediate. Active-site proton acceptor residues include H346 and C376.

The protein belongs to the thiolase-like superfamily. Thiolase family. As to quaternary structure, heterotetramer of two alpha chains (FadB) and two beta chains (FadA).

Its subcellular location is the cytoplasm. The enzyme catalyses an acyl-CoA + acetyl-CoA = a 3-oxoacyl-CoA + CoA. It participates in lipid metabolism; fatty acid beta-oxidation. In terms of biological role, catalyzes the final step of fatty acid oxidation in which acetyl-CoA is released and the CoA ester of a fatty acid two carbons shorter is formed. This Psychrobacter cryohalolentis (strain ATCC BAA-1226 / DSM 17306 / VKM B-2378 / K5) protein is 3-ketoacyl-CoA thiolase.